We begin with the raw amino-acid sequence, 139 residues long: MGETVRFGVSLDEDLLNKFDKLCDRQGYPSRSEALRDMIRQALAKDILQSKDSNAAGVLSLVYDHHTRELSRKLIERQHEMYDSIIATLHIHLDRYNCLEVLIIKGNGGKIQQLADMLCSIRGVKLGAFSFLPVEEDVF.

Ni(2+)-binding residues include His-79, His-90, His-92, and Cys-98.

The protein belongs to the transcriptional regulatory CopG/NikR family. Ni(2+) is required as a cofactor.

Its function is as follows. Transcriptional regulator. The polypeptide is Putative nickel-responsive regulator (Lawsonia intracellularis (strain PHE/MN1-00)).